We begin with the raw amino-acid sequence, 402 residues long: GTPase HflX (402 aa).

Positions Asp-181–Ile-350 constitute a Hflx-type G domain. Residues Gly-187–Thr-194, Phe-212–Thr-216, Asp-233–Gly-236, Asn-300–Asp-303, and Ser-328–Lys-330 each bind GTP. The Mg(2+) site is built by Thr-194 and Thr-214.

Belongs to the TRAFAC class OBG-HflX-like GTPase superfamily. HflX GTPase family. Monomer. Associates with the 50S ribosomal subunit. It depends on Mg(2+) as a cofactor.

Its subcellular location is the cytoplasm. Its function is as follows. GTPase that associates with the 50S ribosomal subunit and may have a role during protein synthesis or ribosome biogenesis. The chain is GTPase HflX from Methanocaldococcus jannaschii (strain ATCC 43067 / DSM 2661 / JAL-1 / JCM 10045 / NBRC 100440) (Methanococcus jannaschii).